A 440-amino-acid chain; its full sequence is Cytochrome c biogenesis protein Ccs1 (440 aa).

Helical transmembrane passes span 19-39 (LRLA…GTFI), 78-98 (NIWF…CTYT), and 164-184 (VGPI…ACGA).

Belongs to the Ccs1/CcsB family. In terms of assembly, may interact with CcsA.

Its subcellular location is the plastid. The protein resides in the chloroplast thylakoid membrane. Its function is as follows. Required during biogenesis of c-type cytochromes (cytochrome c6 and cytochrome f) at the step of heme attachment. The chain is Cytochrome c biogenesis protein Ccs1 from Emiliania huxleyi (Coccolithophore).